A 394-amino-acid polypeptide reads, in one-letter code: Na(+)/H(+) antiporter NhaA (394 aa).

11 consecutive transmembrane segments (helical) span residues 24–44 (AGLV…SPLA), 58–78 (LSVQ…LVGL), 96–116 (TLPG…YVML), 126–146 (GWAI…SLLG), 155–175 (IFLA…IAIF), 180–200 (INVA…SLCA), 214–234 (AVLW…GVLL), 267–287 (VAFA…FASI), 300–320 (VAAG…ALMV), 336–356 (VLGV…IGLL), and 370–390 (GILA…RIAG).

It belongs to the NhaA Na(+)/H(+) (TC 2.A.33) antiporter family.

It is found in the cell inner membrane. It catalyses the reaction Na(+)(in) + 2 H(+)(out) = Na(+)(out) + 2 H(+)(in). Functionally, na(+)/H(+) antiporter that extrudes sodium in exchange for external protons. This Azorhizobium caulinodans (strain ATCC 43989 / DSM 5975 / JCM 20966 / LMG 6465 / NBRC 14845 / NCIMB 13405 / ORS 571) protein is Na(+)/H(+) antiporter NhaA.